Reading from the N-terminus, the 111-residue chain is Aspartate 1-decarboxylase (111 aa).

The Schiff-base intermediate with substrate; via pyruvic acid role is filled by S25. S25 is modified (pyruvic acid (Ser)). T57 is a binding site for substrate. Y58 functions as the Proton donor in the catalytic mechanism. Residue 73-75 (GPA) coordinates substrate.

Belongs to the PanD family. As to quaternary structure, heterooctamer of four alpha and four beta subunits. The cofactor is pyruvate. In terms of processing, is synthesized initially as an inactive proenzyme, which is activated by self-cleavage at a specific serine bond to produce a beta-subunit with a hydroxyl group at its C-terminus and an alpha-subunit with a pyruvoyl group at its N-terminus.

It localises to the cytoplasm. It catalyses the reaction L-aspartate + H(+) = beta-alanine + CO2. It functions in the pathway cofactor biosynthesis; (R)-pantothenate biosynthesis; beta-alanine from L-aspartate: step 1/1. In terms of biological role, catalyzes the pyruvoyl-dependent decarboxylation of aspartate to produce beta-alanine. In Francisella tularensis subsp. holarctica (strain LVS), this protein is Aspartate 1-decarboxylase.